Here is an 843-residue protein sequence, read N- to C-terminus: Protein P (843 aa).

A terminal protein domain (TP) region spans residues 1-177 (MPLSYQHFRK…FCGSPYSWEQ (177 aa)). The segment at 178-346 (ELQHGRLVLQ…HCLFHIVNLI (169 aa)) is spacer. Disordered regions lie at residues 221-240 (SRLG…QGGS) and 289-315 (VSTS…SRSQ). The span at 223-235 (LGPQPTQGQLAGL) shows a compositional bias: low complexity. A polymerase/reverse transcriptase domain (RT) region spans residues 347–690 (DDWGPCAEHG…YLNLYPVARQ (344 aa)). Positions 357–600 (EHRIRTPRTP…YSLNFMGYVI (244 aa)) constitute a Reverse transcriptase domain. Residues Asp429, Asp551, and Asp552 each contribute to the Mg(2+) site.

It belongs to the hepadnaviridae P protein family.

It carries out the reaction DNA(n) + a 2'-deoxyribonucleoside 5'-triphosphate = DNA(n+1) + diphosphate. It catalyses the reaction Endonucleolytic cleavage to 5'-phosphomonoester.. With respect to regulation, activated by host HSP70 and HSP40 in vitro to be able to bind the epsilon loop of the pgRNA. Because deletion of the RNase H region renders the protein partly chaperone-independent, the chaperones may be needed indirectly to relieve occlusion of the RNA-binding site by this domain. Inhibited by several reverse-transcriptase inhibitors: Lamivudine, Adefovir and Entecavir. Functionally, multifunctional enzyme that converts the viral RNA genome into dsDNA in viral cytoplasmic capsids. This enzyme displays a DNA polymerase activity that can copy either DNA or RNA templates, and a ribonuclease H (RNase H) activity that cleaves the RNA strand of RNA-DNA heteroduplexes in a partially processive 3'- to 5'-endonucleasic mode. Neo-synthesized pregenomic RNA (pgRNA) are encapsidated together with the P protein, and reverse-transcribed inside the nucleocapsid. Initiation of reverse-transcription occurs first by binding the epsilon loop on the pgRNA genome, and is initiated by protein priming, thereby the 5'-end of (-)DNA is covalently linked to P protein. Partial (+)DNA is synthesized from the (-)DNA template and generates the relaxed circular DNA (RC-DNA) genome. After budding and infection, the RC-DNA migrates in the nucleus, and is converted into a plasmid-like covalently closed circular DNA (cccDNA). The activity of P protein does not seem to be necessary for cccDNA generation, and is presumably released from (+)DNA by host nuclear DNA repair machinery. The protein is Protein P of Homo sapiens (Human).